Here is a 308-residue protein sequence, read N- to C-terminus: Probable manganese-dependent inorganic pyrophosphatase (308 aa).

Mn(2+) contacts are provided by His-9, Asp-13, Asp-15, Asp-75, His-97, and Asp-149.

This sequence belongs to the PPase class C family. Requires Mn(2+) as cofactor.

It is found in the cytoplasm. The enzyme catalyses diphosphate + H2O = 2 phosphate + H(+). In Listeria monocytogenes serotype 4b (strain CLIP80459), this protein is Probable manganese-dependent inorganic pyrophosphatase.